The chain runs to 64 residues: Alpha-conotoxin-like Ai1.2 (64 aa).

The first 17 residues, 1 to 17 (MFTVFLLVVLATTVVSS), serve as a signal peptide directing secretion. A propeptide spanning residues 18–43 (TSGRRAFRGRNAAAKASGLVGLTDRR) is cleaved from the precursor. Cystine bridges form between C46-C52 and C47-C60. A ser-Xaa-Pro motif, crucial for potent interaction with nAChR region spans residues 48-50 (SDP). Residue G61 is modified to Glycine amide.

This sequence belongs to the conotoxin A superfamily. Expressed by the venom duct.

It localises to the secreted. Its function is as follows. Alpha-conotoxins act on postsynaptic membranes, they bind to the nicotinic acetylcholine receptors (nAChR) and thus inhibit them. The chain is Alpha-conotoxin-like Ai1.2 from Conus ammiralis (Admiral cone).